The chain runs to 486 residues: V-type proton ATPase subunit B1 (486 aa).

Position 2 is an N-acetylglycine (Gly2).

Belongs to the ATPase alpha/beta chains family. V-ATPase is a heteromultimeric enzyme composed of a peripheral catalytic V1 complex (components A to H) attached to an integral membrane V0 proton pore complex (components: a, c, c'', d and e).

The protein localises to the vacuole membrane. Functionally, non-catalytic subunit of the peripheral V1 complex of vacuolar ATPase. V-ATPase is responsible for acidifying a variety of intracellular compartments in eukaryotic cells. The protein is V-type proton ATPase subunit B1 (VHA-B1) of Arabidopsis thaliana (Mouse-ear cress).